We begin with the raw amino-acid sequence, 177 residues long: Peptide methionine sulfoxide reductase MsrA 2 (177 aa).

Cysteine 12 is a catalytic residue.

The protein belongs to the MsrA Met sulfoxide reductase family.

It carries out the reaction L-methionyl-[protein] + [thioredoxin]-disulfide + H2O = L-methionyl-(S)-S-oxide-[protein] + [thioredoxin]-dithiol. The enzyme catalyses [thioredoxin]-disulfide + L-methionine + H2O = L-methionine (S)-S-oxide + [thioredoxin]-dithiol. Its function is as follows. Has an important function as a repair enzyme for proteins that have been inactivated by oxidation. Catalyzes the reversible oxidation-reduction of methionine sulfoxide in proteins to methionine. In Staphylococcus aureus (strain Mu50 / ATCC 700699), this protein is Peptide methionine sulfoxide reductase MsrA 2 (msrA2).